A 250-amino-acid chain; its full sequence is Probable transcriptional regulatory protein RHA1_ro06891 (250 aa).

It belongs to the TACO1 family.

It is found in the cytoplasm. The protein is Probable transcriptional regulatory protein RHA1_ro06891 of Rhodococcus jostii (strain RHA1).